Here is a 397-residue protein sequence, read N- to C-terminus: Succinate--CoA ligase [ADP-forming] subunit beta (397 aa).

In terms of domain architecture, ATP-grasp spans 9-244 (KEIMKQYGIS…LTEEDPREVQ (236 aa)). Residues K46, 53-55 (GRG), E99, L102, and E107 contribute to the ATP site. Positions 199 and 213 each coordinate Mg(2+). Substrate-binding positions include N264 and 321–323 (GIM).

This sequence belongs to the succinate/malate CoA ligase beta subunit family. Heterotetramer of two alpha and two beta subunits. Requires Mg(2+) as cofactor.

It catalyses the reaction succinate + ATP + CoA = succinyl-CoA + ADP + phosphate. The catalysed reaction is GTP + succinate + CoA = succinyl-CoA + GDP + phosphate. The protein operates within carbohydrate metabolism; tricarboxylic acid cycle; succinate from succinyl-CoA (ligase route): step 1/1. In terms of biological role, succinyl-CoA synthetase functions in the citric acid cycle (TCA), coupling the hydrolysis of succinyl-CoA to the synthesis of either ATP or GTP and thus represents the only step of substrate-level phosphorylation in the TCA. The beta subunit provides nucleotide specificity of the enzyme and binds the substrate succinate, while the binding sites for coenzyme A and phosphate are found in the alpha subunit. This chain is Succinate--CoA ligase [ADP-forming] subunit beta, found in Alkaliphilus metalliredigens (strain QYMF).